An 85-amino-acid polypeptide reads, in one-letter code: Small ribosomal subunit protein uS17 (85 aa).

Belongs to the universal ribosomal protein uS17 family. In terms of assembly, part of the 30S ribosomal subunit.

Its function is as follows. One of the primary rRNA binding proteins, it binds specifically to the 5'-end of 16S ribosomal RNA. The chain is Small ribosomal subunit protein uS17 from Mycoplasmoides gallisepticum (strain R(low / passage 15 / clone 2)) (Mycoplasma gallisepticum).